Here is a 118-residue protein sequence, read N- to C-terminus: MIPGELRVNDDLGQIELNVGRTTQTLSVANYGDRPIQVGSHYHFYEVNEALHFEREPTKGFRLNIPAGMAIRFEPGQRRTIELVEFAGKREIYGFQAAIMGNVDGHITATISDDKEVK.

Belongs to the urease beta subunit family. In terms of assembly, heterotrimer of UreA (gamma), UreB (beta) and UreC (alpha) subunits. Three heterotrimers associate to form the active enzyme.

The protein resides in the cytoplasm. The enzyme catalyses urea + 2 H2O + H(+) = hydrogencarbonate + 2 NH4(+). Its pathway is nitrogen metabolism; urea degradation; CO(2) and NH(3) from urea (urease route): step 1/1. The protein is Urease subunit beta of Aliivibrio fischeri (strain MJ11) (Vibrio fischeri).